The chain runs to 369 residues: Serine/threonine-protein phosphatase PP2A-1 catalytic subunit (369 aa).

The disordered stretch occupies residues 1-57; the sequence is MDTDLDVPMQDAVTEQLTPTVSEDMDLNNNSSDNNAEEFSVDDLKPGSSGIADHKSS. Mn(2+) is bound by residues Asp117, His119, Asp145, and Asn177. Residue His178 is the Proton donor of the active site. Mn(2+)-binding residues include His227 and His301. Residues 348 to 369 are disordered; sequence QYDPSVRPGEPSVSRKTPDYFL. Leu369 is modified (leucine methyl ester).

This sequence belongs to the PPP phosphatase family. PP-2A subfamily. Inactivated in a complex with phosphatase methylesterase PPE1 (PP2Ai). Interacts with phosphatase 2A activator RRD2, which can reactivate PP2Ai by dissociating the catalytic subunit from the complex. Forms a ternary complex with RRD2-TAP42. Mn(2+) serves as cofactor. In terms of processing, reversibly methyl esterified on Leu-369 by leucine carboxyl methyltransferase 1 (PPM1) and protein phosphatase methylesterase 1 (PPE1). Carboxyl methylation influences the affinity of the catalytic subunit for the different regulatory subunits, thereby modulating the PP2A holoenzyme's substrate specificity, enzyme activity and cellular localization.

The enzyme catalyses O-phospho-L-seryl-[protein] + H2O = L-seryl-[protein] + phosphate. The catalysed reaction is O-phospho-L-threonyl-[protein] + H2O = L-threonyl-[protein] + phosphate. In terms of biological role, exact function not known, phosphatase 2A performs an essential cellular function. This chain is Serine/threonine-protein phosphatase PP2A-1 catalytic subunit (PPH21), found in Saccharomyces cerevisiae (strain ATCC 204508 / S288c) (Baker's yeast).